A 142-amino-acid chain; its full sequence is MSKPKHIRTLADTEAQAVARNIRVSPRKLNLVAAMIRNQPADKAIAALTFSRRRIAQQVKKTLESAVANAENNHQLDVDQLVVKTAEVGKSIVMKRFHARGRGRSARVEKFFSHLKIVVAERAEAPEETKPSRGTNKEQKAA.

The tract at residues 122-142 (RAEAPEETKPSRGTNKEQKAA) is disordered.

Belongs to the universal ribosomal protein uL22 family. Part of the 50S ribosomal subunit.

Functionally, this protein binds specifically to 23S rRNA; its binding is stimulated by other ribosomal proteins, e.g. L4, L17, and L20. It is important during the early stages of 50S assembly. It makes multiple contacts with different domains of the 23S rRNA in the assembled 50S subunit and ribosome. Its function is as follows. The globular domain of the protein is located near the polypeptide exit tunnel on the outside of the subunit, while an extended beta-hairpin is found that lines the wall of the exit tunnel in the center of the 70S ribosome. This Gluconobacter oxydans (strain 621H) (Gluconobacter suboxydans) protein is Large ribosomal subunit protein uL22.